Consider the following 256-residue polypeptide: Ribonuclease HII (256 aa).

The RNase H type-2 domain maps to Q72–N256. Residues D78, E79, and D170 each coordinate a divalent metal cation.

Belongs to the RNase HII family. The cofactor is Mn(2+). Requires Mg(2+) as cofactor.

The protein localises to the cytoplasm. It carries out the reaction Endonucleolytic cleavage to 5'-phosphomonoester.. Its function is as follows. Endonuclease that specifically degrades the RNA of RNA-DNA hybrids. The sequence is that of Ribonuclease HII from Limosilactobacillus reuteri (strain DSM 20016) (Lactobacillus reuteri).